The sequence spans 461 residues: D-phenylhydantoinase (461 aa).

3 residues coordinate a divalent metal cation: His59, His61, and Lys151. An N6-carboxylysine modification is found at Lys151. Tyr156 serves as a coordination point for substrate. A divalent metal cation is bound by residues His182 and His239. Ser286 provides a ligand contact to substrate. Asp313 provides a ligand contact to a divalent metal cation. Asn335 contributes to the substrate binding site.

Belongs to the metallo-dependent hydrolases superfamily. Hydantoinase/dihydropyrimidinase family. In terms of assembly, homotetramer. Requires a divalent metal cation as cofactor. Carboxylation allows a single lysine to coordinate two divalent metal cations.

The catalysed reaction is D-5-phenylhydantoin + H2O = N-carbamoyl-D-phenylglycine + H(+). Functionally, catalyzes the stereospecific hydrolysis of the cyclic amide bond of D-hydantoin derivatives with an aromatic side chains at the 5'-position. Has no activity on dihydropyrimidines. The physiological function is unknown. The polypeptide is D-phenylhydantoinase (Escherichia coli (strain 55989 / EAEC)).